We begin with the raw amino-acid sequence, 520 residues long: Pantetheine hydrolase VNN2 (520 aa).

Positions 1–22 are cleaved as a signal peptide; the sequence is MVTSSFPISVAVFALITLQVGT. The 276-residue stretch at 31-306 folds into the CN hydrolase domain; the sequence is YEHAVILPNK…GKLLLSEVDS (276 aa). Asparagine 39 carries an N-linked (GlcNAc...) asparagine glycan. The active-site Proton acceptor is the glutamate 80. Catalysis depends on lysine 179, which acts as the Proton donor. Cysteine 211 functions as the Nucleophile in the catalytic mechanism. Asparagine 273, asparagine 347, asparagine 357, asparagine 411, and asparagine 468 each carry an N-linked (GlcNAc...) asparagine glycan. A lipid anchor (GPI-anchor amidated cysteine) is attached at cysteine 493. The propeptide at 494 to 520 is removed in mature form; it reads GTSNSAITYLLIFILLMIIALQNIVML.

The protein belongs to the carbon-nitrogen hydrolase superfamily. BTD/VNN family. As to expression, widely expressed with higher expression in spleen and blood.

The protein localises to the cell membrane. It catalyses the reaction (R)-pantetheine + H2O = cysteamine + (R)-pantothenate. In terms of biological role, amidohydrolase that hydrolyzes specifically one of the carboamide linkages in D-pantetheine thus recycling pantothenic acid (vitamin B5) and releasing cysteamine. Involved in the thymus homing of bone marrow cells. May regulate beta-2 integrin-mediated cell adhesion, migration and motility of neutrophil. The protein is Pantetheine hydrolase VNN2 of Homo sapiens (Human).